The chain runs to 250 residues: Probable transcriptional regulatory protein Mkms_2298 (250 aa).

The protein belongs to the TACO1 family.

The protein resides in the cytoplasm. The sequence is that of Probable transcriptional regulatory protein Mkms_2298 from Mycobacterium sp. (strain KMS).